The following is a 211-amino-acid chain: Uracil phosphoribosyltransferase (211 aa).

5-phospho-alpha-D-ribose 1-diphosphate is bound by residues Arg79, Arg104, and 131-139 (DPMLATGGS). Residues Ile196 and 201–203 (GDA) contribute to the uracil site. Residue Asp202 participates in 5-phospho-alpha-D-ribose 1-diphosphate binding.

It belongs to the UPRTase family. It depends on Mg(2+) as a cofactor.

It carries out the reaction UMP + diphosphate = 5-phospho-alpha-D-ribose 1-diphosphate + uracil. Its pathway is pyrimidine metabolism; UMP biosynthesis via salvage pathway; UMP from uracil: step 1/1. With respect to regulation, allosterically activated by GTP. In terms of biological role, catalyzes the conversion of uracil and 5-phospho-alpha-D-ribose 1-diphosphate (PRPP) to UMP and diphosphate. This chain is Uracil phosphoribosyltransferase, found in Limosilactobacillus fermentum (strain NBRC 3956 / LMG 18251) (Lactobacillus fermentum).